A 72-amino-acid chain; its full sequence is Translation initiation factor IF-1 (72 aa).

The S1-like domain maps to 1–72 (MAKEDVIEMQ…SKGRIVFRAR (72 aa)).

It belongs to the IF-1 family. In terms of assembly, component of the 30S ribosomal translation pre-initiation complex which assembles on the 30S ribosome in the order IF-2 and IF-3, IF-1 and N-formylmethionyl-tRNA(fMet); mRNA recruitment can occur at any time during PIC assembly.

The protein localises to the cytoplasm. In terms of biological role, one of the essential components for the initiation of protein synthesis. Stabilizes the binding of IF-2 and IF-3 on the 30S subunit to which N-formylmethionyl-tRNA(fMet) subsequently binds. Helps modulate mRNA selection, yielding the 30S pre-initiation complex (PIC). Upon addition of the 50S ribosomal subunit IF-1, IF-2 and IF-3 are released leaving the mature 70S translation initiation complex. The chain is Translation initiation factor IF-1 from Pseudoalteromonas translucida (strain TAC 125).